A 555-amino-acid chain; its full sequence is Genome polyprotein (555 aa).

Residues 1–7 lie on the Extracellular side of the membrane; sequence KHAQRIE. A helical membrane pass occupies residues 8 to 28; sequence TWILRHPGFTIMAAILAYTIG. The Cytoplasmic segment spans residues 29–34; that stretch reads TTHFQR. A helical membrane pass occupies residues 35–49; that stretch reads ALIFILLTAVAPSMT. The Extracellular portion of the chain corresponds to 50–494; it reads MRCIGISNRD…LHQVFGAIYG (445 aa). 4 disulfides stabilise this stretch: Cys52/Cys79, Cys109/Cys170, Cys123/Cys154, and Cys141/Cys165. N-linked (GlcNAc...) asparagine; by host glycosylation occurs at Asn116. The fusion peptide stretch occupies residues 147–160; it reads DRGWGNGCGLFGKG. N-linked (GlcNAc...) asparagine; by host glycosylation occurs at Asn202. Cystine bridges form between Cys234-Cys334 and Cys351-Cys382. The chain crosses the membrane as a helical span at residues 495–515; that stretch reads AAFSGVSWTMKILIGVIITWI. Residues 516 to 521 are Cytoplasmic-facing; the sequence is GMNSRS. Residues 522–542 form a helical membrane-spanning segment; the sequence is TSLSVSLVLVGIVTLYLEVMV. The Extracellular segment spans residues 543–555; that stretch reads QADSGCVVSWKNK.

As to quaternary structure, homodimer; in the endoplasmic reticulum and Golgi. Interacts with protein prM. Interacts with non-structural protein 1. Homodimer; Homohexamer when secreted. Interacts with envelope protein E. In terms of processing, N-glycosylated. Post-translationally, N-glycosylated. The excreted form is glycosylated and this is required for efficient secretion of the protein from infected cells. Specific enzymatic cleavages in vivo yield mature proteins. Cleavages in the lumen of endoplasmic reticulum are performed by host signal peptidase, wereas cleavages in the cytoplasmic side are performed by serine protease NS3. Signal cleavage at the 2K-4B site requires a prior NS3 protease-mediated cleavage at the 4A-2K site.

The protein localises to the virion membrane. It is found in the host endoplasmic reticulum membrane. Its subcellular location is the secreted. May play a role in virus budding. Exerts cytotoxic effects by activating a mitochondrial apoptotic pathway through M ectodomain. May display a viroporin activity. Its function is as follows. Binds to host cell surface receptor and mediates fusion between viral and cellular membranes. Envelope protein is synthesized in the endoplasmic reticulum in the form of heterodimer with protein prM. They play a role in virion budding in the ER, and the newly formed immature particle is covered with 60 spikes composed of heterodimer between precursor prM and envelope protein E. The virion is transported to the Golgi apparatus where the low pH causes dissociation of PrM-E heterodimers and formation of E homodimers. prM-E cleavage is inefficient, and many virions are only partially matured. These uncleaved prM would play a role in immune evasion. In terms of biological role, involved in immune evasion, pathogenesis and viral replication. Once cleaved off the polyprotein, is targeted to three destinations: the viral replication cycle, the plasma membrane and the extracellular compartment. Essential for viral replication. Required for formation of the replication complex and recruitment of other non-structural proteins to the ER-derived membrane structures. Excreted as a hexameric lipoparticle that plays a role against host immune response. Antagonizing the complement function. Binds to the host macrophages and dendritic cells. Inhibits signal transduction originating from Toll-like receptor 3 (TLR3). Functionally, disrupts the host endothelial glycocalyx layer of host pulmonary microvascular endothelial cells, inducing degradation of sialic acid and shedding of heparan sulfate proteoglycans. NS1 induces expression of sialidases, heparanase, and activates cathepsin L, which activates heparanase via enzymatic cleavage. These effects are probably linked to the endothelial hyperpermeability observed in severe dengue disease. This Dengue virus type 2 (strain Thailand/TH-36/1958) (DENV-2) protein is Genome polyprotein.